Here is a 212-residue protein sequence, read N- to C-terminus: Glycerol-3-phosphate acyltransferase (212 aa).

The next 6 helical transmembrane spans lie at 8–28, 59–79, 90–110, 122–142, 148–168, and 169–189; these read IFLSAALIALAYLIGSIPFAV, AAAALTLLGDAFKGWFALWLA, VFALVALAAFLGHLYPVFLGF, ILLAIHPGLALATAATWVIIA, SSLAALVAAFFAPVYYLFGSG, and VAWYAQGPVGVALAIITLLLF.

The protein belongs to the PlsY family. In terms of assembly, probably interacts with PlsX.

It is found in the cell inner membrane. It carries out the reaction an acyl phosphate + sn-glycerol 3-phosphate = a 1-acyl-sn-glycero-3-phosphate + phosphate. It participates in lipid metabolism; phospholipid metabolism. In terms of biological role, catalyzes the transfer of an acyl group from acyl-phosphate (acyl-PO(4)) to glycerol-3-phosphate (G3P) to form lysophosphatidic acid (LPA). This enzyme utilizes acyl-phosphate as fatty acyl donor, but not acyl-CoA or acyl-ACP. The polypeptide is Glycerol-3-phosphate acyltransferase (Bordetella petrii (strain ATCC BAA-461 / DSM 12804 / CCUG 43448)).